Reading from the N-terminus, the 156-residue chain is Ribosomal RNA large subunit methyltransferase H (156 aa).

S-adenosyl-L-methionine-binding positions include Leu73, Gly104, and 123 to 128; that span reads LSDLTL.

This sequence belongs to the RNA methyltransferase RlmH family. In terms of assembly, homodimer.

The protein localises to the cytoplasm. The catalysed reaction is pseudouridine(1915) in 23S rRNA + S-adenosyl-L-methionine = N(3)-methylpseudouridine(1915) in 23S rRNA + S-adenosyl-L-homocysteine + H(+). In terms of biological role, specifically methylates the pseudouridine at position 1915 (m3Psi1915) in 23S rRNA. This chain is Ribosomal RNA large subunit methyltransferase H, found in Leptothrix cholodnii (strain ATCC 51168 / LMG 8142 / SP-6) (Leptothrix discophora (strain SP-6)).